The sequence spans 462 residues: Neuronal acetylcholine receptor subunit non-alpha-2 (462 aa).

The signal sequence occupies residues M1–R30. At E31–L234 the chain is on the extracellular side. N-linked (GlcNAc...) asparagine glycans are attached at residues N53 and N168. C155 and C169 are joined by a disulfide. 3 helical membrane passes run P235 to L259, V267 to I284, and Y301 to V322. Topologically, residues H323–R428 are cytoplasmic. A compositionally biased stretch (basic and acidic residues) spans E362–P372. The tract at residues E362–E384 is disordered. The chain crosses the membrane as a helical span at residues I429–F446.

This sequence belongs to the ligand-gated ion channel (TC 1.A.9) family. Acetylcholine receptor (TC 1.A.9.1) subfamily. In terms of assembly, neuronal AChR seems to be composed of two different type of subunits: alpha and beta.

Its subcellular location is the postsynaptic cell membrane. It is found in the cell membrane. Its function is as follows. After binding acetylcholine, the AChR responds by an extensive change in conformation that affects all subunits and leads to opening of an ion-conducting channel across the plasma membrane. This chain is Neuronal acetylcholine receptor subunit non-alpha-2, found in Carassius auratus (Goldfish).